A 344-amino-acid polypeptide reads, in one-letter code: Programmed cell death protein 2 (344 aa).

Zn(2+) is bound by residues Cys-135, Cys-138, Cys-146, Cys-149, Cys-155, His-159, His-168, and Cys-172. An MYND-type; atypical zinc finger spans residues 135–172 (CRVCGCSGPKRCSRCHKAHYCSKEHQSLDWRLGHKQAC).

Ubiquitinated by PRKN, promoting proteasomal degradation.

The protein resides in the nucleus. May be a DNA-binding protein with a regulatory function. May play an important role in cell death and/or in regulation of cell proliferation. In Bos taurus (Bovine), this protein is Programmed cell death protein 2 (PDCD2).